The chain runs to 384 residues: Organic solute transporter alpha-like protein 1 (384 aa).

The Extracellular segment spans residues 1-38 (MEIVKTIIPHNRSYIEPPIPSATEWLANMSVMHVSCLT). 2 N-linked (GlcNAc...) asparagine glycosylation sites follow: N11 and N28. Residues 39–59 (IACVFVAITFLSSFFHLFFVL) form a helical membrane-spanning segment. The Cytoplasmic portion of the chain corresponds to 60 to 70 (KYVSNERIRND). Residues 71–91 (MYALIFMFPITTFASLVGMFI) traverse the membrane as a helical segment. Residues 92 to 93 (PR) lie on the Extracellular side of the membrane. The helical transmembrane segment at 94–114 (AAIFLYAVSLVYFMFTLFIMV) threads the bilayer. Over 115 to 165 (TLLFNIFGGRQEMSAYLLQRNIRVNFTVPPLCFFKFLPTVESTDQNLRRIE) the chain is Cytoplasmic. A helical transmembrane segment spans residues 166 to 186 (WLVFQTPIIRTLLELVSVVVS). Over 187–202 (MEQEGRRESVWFVFSQ) the chain is Extracellular. The chain crosses the membrane as a helical span at residues 203 to 223 (LMALLSMCIAFYGCYVMVPLG). Residues 224–240 (REKHAPYRFDFLFRTCD) are Cytoplasmic-facing. The chain crosses the membrane as a helical span at residues 241-261 (IAQCIYTIQKFVFEFAAAVGL). Residues 262-273 (ITSDRYLPAAAK) lie on the Extracellular side of the membrane. Residues 274–294 (ALWWASFMCTWEMMLLSALCS) traverse the membrane as a helical segment. Residues 295-384 (YCLRPAKCKF…FDSLSQIQGQ (90 aa)) are Cytoplasmic-facing.

Belongs to the OST-alpha family.

The protein localises to the cell membrane. Its function is as follows. Probable transporter. The polypeptide is Organic solute transporter alpha-like protein 1 (osta-1) (Caenorhabditis elegans).